Reading from the N-terminus, the 410-residue chain is Elongation factor Tu, apicoplast (410 aa).

Residues 10–214 (KQHINLGTIG…QIIDNIIIPT (205 aa)) form the tr-type G domain. Residues 19–26 (GHVDHGKT) form a G1 region. Residue 19-26 (GHVDHGKT) participates in GTP binding. Threonine 26 is a binding site for Mg(2+). The tract at residues 60–64 (GITIN) is G2. A G3 region spans residues 81–84 (DCPG). GTP is bound by residues 81-85 (DCPGH) and 136-139 (NKED). Residues 136–139 (NKED) are G4. Residues 174-176 (SAL) are G5.

This sequence belongs to the TRAFAC class translation factor GTPase superfamily. Classic translation factor GTPase family. EF-Tu/EF-1A subfamily.

The protein localises to the plastid. It is found in the apicoplast. The catalysed reaction is GTP + H2O = GDP + phosphate + H(+). Its function is as follows. GTP hydrolase that promotes the GTP-dependent binding of aminoacyl-tRNA to the A-site of ribosomes during protein biosynthesis. The sequence is that of Elongation factor Tu, apicoplast (tufA) from Plasmodium falciparum (isolate 3D7).